The primary structure comprises 315 residues: Ribosomal RNA small subunit methyltransferase H (315 aa).

Residues 33 to 35, Asp52, Phe84, Asp106, and Gln113 contribute to the S-adenosyl-L-methionine site; that span reads GGH. Residues 290–315 are disordered; it reads PITASTSELENNNRSHSAKLRVAEKL. Polar residues predominate over residues 292–304; the sequence is TASTSELENNNRS.

Belongs to the methyltransferase superfamily. RsmH family.

It localises to the cytoplasm. It carries out the reaction cytidine(1402) in 16S rRNA + S-adenosyl-L-methionine = N(4)-methylcytidine(1402) in 16S rRNA + S-adenosyl-L-homocysteine + H(+). Functionally, specifically methylates the N4 position of cytidine in position 1402 (C1402) of 16S rRNA. The polypeptide is Ribosomal RNA small subunit methyltransferase H (Lactobacillus helveticus (strain DPC 4571)).